Here is a 418-residue protein sequence, read N- to C-terminus: Zinc metalloproteinase nas-8 (418 aa).

The N-terminal stretch at 1 to 28 is a signal peptide; sequence MMNRASLCRIAVLLCILHLSHLIDSTYA. The propeptide occupies 29-100; that stretch reads QSYLTEKDFL…TSKLKSGVRR (72 aa). One can recognise a Peptidase M12A domain in the interval 101-296; that stretch reads NGVTSVIKRW…LKINKLYNCP (196 aa). 5 cysteine pairs are disulfide-bonded: cysteine 143/cysteine 295, cysteine 165/cysteine 184, cysteine 347/cysteine 381, cysteine 354/cysteine 374, and cysteine 361/cysteine 378. Residue histidine 192 participates in Zn(2+) binding. The active site involves glutamate 193. Residues histidine 196 and histidine 202 each contribute to the Zn(2+) site. Positions 347–381 constitute a ShKT domain; that stretch reads CSDRTNLCWRWLDRCRSYFFEKIMKEFCALSCGYC.

Requires Zn(2+) as cofactor.

It is found in the secreted. It carries out the reaction Hydrolysis of peptide bonds in substrates containing five or more amino acids, preferentially with Ala in P1', and Pro in P2'.. Inhibited by ethylene glycol-bis(2-aminoethylether)-N,N,N,N-tetraacetic acid (EGTA), ethylenediaminetetraacetic acid (EDTA) and o-phenanthroline. Metalloprotease. In Steinernema carpocapsae (Entomopathogenic nematode), this protein is Zinc metalloproteinase nas-8.